A 201-amino-acid polypeptide reads, in one-letter code: Protease (201 aa).

Residues His-55, Asp-72, and Cys-122 contribute to the active site.

Belongs to the peptidase C5 family. Interacts with protease cofactor pVI-C; this interaction is necessary for protease activation.

The protein localises to the virion. The protein resides in the host nucleus. The catalysed reaction is Cleaves proteins of the adenovirus and its host cell at two consensus sites: -Yaa-Xaa-Gly-Gly-|-Xaa- and -Yaa-Xaa-Gly-Xaa-|-Gly- (in which Yaa is Met, Ile or Leu, and Xaa is any amino acid).. Requires DNA and protease cofactor for maximal activation. Inside nascent virions, becomes partially activated by binding to the viral DNA, allowing it to cleave the cofactor that binds to the protease and fully activates it. Actin, like the viral protease cofactor, seems to act as a cofactor in the cleavage of cytokeratin 18 and of actin itself. Its function is as follows. Cleaves viral precursor proteins (pTP, pIIIa, pVI, pVII, pVIII, and pX) inside newly assembled particles giving rise to mature virions. Protease complexed to its cofactor slides along the viral DNA to specifically locate and cleave the viral precursors. Mature virions have a weakened organization compared to the unmature virions, thereby facilitating subsequent uncoating. Without maturation, the particle lacks infectivity and is unable to uncoat. Late in adenovirus infection, in the cytoplasm, may participate in the cytoskeleton destruction. Cleaves host cell cytoskeletal keratins K7 and K18. This chain is Protease, found in Pantherophis guttatus (Corn snake).